Reading from the N-terminus, the 662-residue chain is MIPSQEYRKSVVHQPENVPSGFRGATHWLAGKVHRRQSKQQALLEQAHTIHTAAEAHRTLSLVDLQAQLLSFRDHFRRRARGYEQHISAAMALIVEASHRQLGLRPFPVQIMGALALLEGSLIEMQTGEGKTLVAALAAVFLGWSGRSCHVITVNDYLASRDYARLEPLYTFCGVTASCVIGELKRPERQRSYQAAVVYVTSKELVADFLKDRLLLHGVSDPSRHFLHSSNTLREGDEVPVLNGLWAAIVDEADSVLVDDAATPLIISRPVKNEPLMEACREAVRLAAKLQPTLHYTVEERYKQIALTSEGNATIEQMLPTLPPFWHSATRRNELLLLVLNAREFFRKGKDYVVSDGKVVIIDEFTGRLMPDRKWQKGTQQIVELLEGVEPTDPVEVAARISFQRFFRFYKLLCGMSGTVKGVTAELWHIYSLPYVAIPTNKPSRRTTQAPEYFLEKGAKYAALIATLEALHRQGVPILVGTRSVRESEFLADLLRQKMLNFQLLNAIYHKEEAAIIARAGERGNITIATNMAGRGTDILLEQGVAALGGLHVLLAEPNEAERIDRQFYGRCARQGDPGTSYSYIALDDRLLQRFFPERFLNSVMAEVLLRRLPGSHALMQLLVYLAQQMAQRMAYQQRLSLLRRDEQLDQLMSFAGSGPKF.

ATP is bound by residues glutamine 110, 128 to 132 (GEGKT), and aspartate 538.

The protein belongs to the SecA family. In terms of assembly, monomer and homodimer. Part of the essential Sec protein translocation apparatus which comprises SecA, SecYEG and auxiliary proteins SecDF. Other proteins may also be involved.

The protein localises to the cell inner membrane. Its subcellular location is the cytoplasm. The catalysed reaction is ATP + H2O + cellular proteinSide 1 = ADP + phosphate + cellular proteinSide 2.. Its function is as follows. Part of the Sec protein translocase complex. Interacts with the SecYEG preprotein conducting channel. Has a central role in coupling the hydrolysis of ATP to the transfer of proteins into and across the cell membrane, serving as an ATP-driven molecular motor driving the stepwise translocation of polypeptide chains across the membrane. The sequence is that of Protein translocase subunit SecA 2 from Chlorobium chlorochromatii (strain CaD3).